Here is a 365-residue protein sequence, read N- to C-terminus: uncharacterized protein (365 aa).

Belongs to the mycobacterial PPE family.

This is an uncharacterized protein from Mycobacterium tuberculosis (strain ATCC 25618 / H37Rv).